The chain runs to 304 residues: Cell surface-binding protein OPG105 (304 aa).

Belongs to the alpha-carbonic anhydrase family. As to quaternary structure, homodimer; disulfide-linked. In terms of processing, apparently non-glycosylated.

It is found in the virion membrane. Its function is as follows. Binds to chondroitin sulfate on the cell surface to provide virion attachment to target cell. The protein is Cell surface-binding protein OPG105 (OPG105) of Monkeypox virus.